The chain runs to 367 residues: Ribosomal lysine N-methyltransferase 5 (367 aa).

Residues 55 to 74 form a disordered region; sequence EGGRKKKRVRRRNKASSVEE. Residues 58-68 are compositionally biased toward basic residues; it reads RKKKRVRRRNK. Residues Trp-110, 170–172, Asp-192, Trp-256, and Met-288 each bind S-adenosyl-L-methionine; that span reads GAG.

The protein belongs to the class I-like SAM-binding methyltransferase superfamily. RKM5 family.

S-adenosyl-L-methionine-dependent protein-lysine N-methyltransferase that monomethylates 60S ribosomal protein L1 (RPL1A and RPL1B) at 'Lys-46'. This is Ribosomal lysine N-methyltransferase 5 (RKM5) from Saccharomyces cerevisiae (strain VIN 13) (Baker's yeast).